Consider the following 529-residue polypeptide: Zinc finger protein 572 (529 aa).

The segment at 1–125 is disordered; it reads MEQEQKLLVS…TGPAGQQNPS (125 aa). A Glycyl lysine isopeptide (Lys-Gly) (interchain with G-Cter in SUMO2) cross-link involves residue Lys-6. The segment covering 22 to 42 has biased composition (polar residues); sequence KNTITGDESKNNLKTVQFSNS. The span at 43-68 shows a compositional bias: basic and acidic residues; that stretch reads KADKERASKWSRSDGPENYKDEDTKE. The span at 87-96 shows a compositional bias: polar residues; it reads NDSNLGSQRN. 12 C2H2-type zinc fingers span residues 131-153, 159-181, 187-209, 215-237, 243-265, 271-293, 299-321, 327-349, 383-405, 411-433, 439-461, and 467-489; these read YKCS…QRTH, YRCS…LRTH, YQCG…ERTH, YKCP…HRSH, YECP…QRTH, YKCP…QRTH, YKCP…QRIH, YQCI…QKMH, YKCC…QRTH, YRCS…QRTH, YKCP…RRTH, and YKCT…RKIH.

The protein belongs to the krueppel C2H2-type zinc-finger protein family.

Its subcellular location is the nucleus. Functionally, may be involved in transcriptional regulation. In Bos taurus (Bovine), this protein is Zinc finger protein 572 (ZNF572).